A 1147-amino-acid chain; its full sequence is Disease resistance protein RPP4 (1147 aa).

The TIR domain maps to 11–175 (RRYDVFPSFS…KIANDVSNKL (165 aa)). The active site involves E86. Residues 189-446 (EDHIKAIKSI…CFFNGFKVSN (258 aa)) form the NB-ARC domain. 18 LRR repeats span residues 548 to 573 (MRNLQYLEIGHWSEIGLWSEIGLWSK), 584 to 606 (PLKLKLLKWNYCPLKSLPSTFKA), 608 to 629 (YLVNLIMKYSKLEKLWEGTLPL), 630 to 653 (GSLKKMDLGCSNNLKEIPDLSLAI), 655 to 676 (LEELNLSKCESLVTLPSSIQNA), 698 to 721 (MCNLEYLSVDWSSMEGTQGLIYLP), 722 to 743 (RKLKRLWWDYCPVKRLPSNFKA), 744 to 766 (EYLVELRMENSDLEKLWDGTQPL), 767 to 790 (GSLKEMYLHGSKYLKEIPDLSLAI), 792 to 813 (LERLYLFGCESLVTLPSSIQNA), 814 to 836 (TKLINLDMRDCKKLESFPTDLNL), 837 to 860 (ESLEYLNLTGCPNLRNFPAIKMGC), 926 to 950 (LGSLKRMDLSESENLTEIPDLSKAT), 952 to 973 (LKRLYLNGCKSLVTLPSTIGNL), 974 to 996 (HRLVRLEMKECTGLELLPTDVNL), 997 to 1017 (SSLIILDLSGCSSLRTFPLIS), 1018 to 1042 (TRIECLYLENTAIEEVPCCIEDLTR), and 1044 to 1064 (SVLLMYCCQRLKNISPNIFRL).

In terms of assembly, interacts with RSH1.

It carries out the reaction NAD(+) + H2O = ADP-D-ribose + nicotinamide + H(+). Functionally, TIR-NB-LRR receptor-like protein that confers resistance to the pathogen Hyaloperonospora arabidopsis isolates Emoy2 and Emwa1 (downy mildew disease). Plays a role in the regulation of temperature response during plant growth and survival. This chain is Disease resistance protein RPP4, found in Arabidopsis thaliana (Mouse-ear cress).